The chain runs to 122 residues: MESRIIEIDPNCVNEFEKLKKKYKIESIFLKLNDNFNLLYVEKTLSKISQDDFLESIPVDQPRLIIYKKYSNNKIIFIRWIPEIVQDTIEYSYSNASTAILELLIGINEYMEVKDLIQLSNL.

The ADF-H domain occupies 3–122; it reads SRIIEIDPNC…VKDLIQLSNL (120 aa).

The protein belongs to the actin-binding proteins ADF family.

The protein localises to the cytoplasm. It is found in the cytoskeleton. Functionally, controls actin polymerization and depolymerization. The chain is Cofilin-5 (cofF) from Dictyostelium discoideum (Social amoeba).